Reading from the N-terminus, the 207-residue chain is C-type lectin domain family 2 member D11 (207 aa).

The Cytoplasmic portion of the chain corresponds to 1 to 44 (MSAKKASQPMLNTTGSLQEGEMGKMFHGKCLRIVSPESPAKLYC). 2 positions are modified to phosphoserine: Ser-7 and Ser-16. The helical; Signal-anchor for type II membrane protein transmembrane segment at 45–65 (CYGVIMVLSVAVVALSVALSV) threads the bilayer. Topologically, residues 66 to 207 (KMTPQISTIN…LQCKTPFSPM (142 aa)) are extracellular. A C-type lectin domain is found at 87–198 (VGNKCFYFSE…SCSKLNSYSL (112 aa)). Asn-100 carries N-linked (GlcNAc...) asparagine glycosylation.

The protein localises to the cell membrane. Receptor for KLRB1B that protects target cells against natural killer cell-mediated lysis. This is C-type lectin domain family 2 member D11 (Clec2d11) from Rattus norvegicus (Rat).